Reading from the N-terminus, the 234-residue chain is Fibroblast growth factor-binding protein 1 (234 aa).

Residues 1 to 23 (MRTHGLTLLSLLLLAVPMLLVEA) form the signal peptide. The segment at 25 to 59 (KEGRNRRGSKASADESLALGKPGKEPRSQPTNYPI) is disordered. Intrachain disulfides connect Cys71–Cys88, Cys97–Cys130, and Cys106–Cys142. An N-linked (GlcNAc...) asparagine glycan is attached at Asn155. Residues 169-200 (MEPSPMDTVEVTTSSSPEKTQTMATKDPQCEE) are disordered. Ser172 carries an O-linked (GalNAc...) serine glycan. Residues 178–192 (EVTTSSSPEKTQTMA) show a composition bias toward polar residues. The sufficient for interaction with FGF2 and FGF2-induced effects stretch occupies residues 194-234 (KDPQCEEEDLKNQRKAALEYCGETWGSLCNFFLSMVQGSSC). 2 disulfide bridges follow: Cys198–Cys234 and Cys214–Cys222.

The protein belongs to the fibroblast growth factor-binding protein family. Found in a complex with FGFBP1, FGF1 and FGF2. Interacts with FGF1, FGF7, FGF10, FGF22 and HSPG2. Interacts with FGF2.

Its subcellular location is the secreted. The protein localises to the extracellular space. It localises to the cell membrane. In terms of biological role, acts as a carrier protein that release fibroblast-binding factors (FGFs) from the extracellular matrix (EM) storage and thus enhance the mitogenic activity of FGFs. Enhances FGF2 signaling during tissue repair, angiogenesis and in tumor growth. The sequence is that of Fibroblast growth factor-binding protein 1 (FGFBP1) from Bos taurus (Bovine).